An 892-amino-acid polypeptide reads, in one-letter code: Phenylalanine--tRNA ligase beta subunit (892 aa).

The tRNA-binding domain occupies 39–150 (NPGVEGVVVG…PGLEPGMDVA (112 aa)). Residues 406–569 (AVPPVILLRT…RCEGYDAIPL (164 aa)) enclose the B5 domain. The insert stretch occupies residues 442–518 (VLTPADLAAD…ALLGGGESDG (77 aa)). 4 residues coordinate Mg(2+): Asp547, Asp553, Glu556, and Glu557. In terms of domain architecture, FDX-ACB spans 799–891 (PRFPAVTRDV…ALKALGAELR (93 aa)).

The protein belongs to the phenylalanyl-tRNA synthetase beta subunit family. Type 1 subfamily. Tetramer of two alpha and two beta subunits. The cofactor is Mg(2+).

The protein resides in the cytoplasm. The enzyme catalyses tRNA(Phe) + L-phenylalanine + ATP = L-phenylalanyl-tRNA(Phe) + AMP + diphosphate + H(+). The protein is Phenylalanine--tRNA ligase beta subunit of Symbiobacterium thermophilum (strain DSM 24528 / JCM 14929 / IAM 14863 / T).